The following is a 240-amino-acid chain: MSQLKELPFSTLQFYATAPYPCSYLPERQARSQVAAPGHLINADTYCQLVQQGFRRSGLFTYRPHCDNCQACIPVRVDSVNYTPNRSQRRAWKAHQGLRAFVAELAWSPEHYSLYTRYQQGRHPGGGMDDDSRSQYAQFLLTSRVNTRLVEFRQPEGQLVMVSIIDVLDDGLSSVYTFYDPELAGSLGTYSILWQIEQCRMLELPWLYLGYWIKDSRKMAYKAGFLPQERYIDGQWTAPE.

Belongs to the R-transferase family. Bpt subfamily.

The protein resides in the cytoplasm. The catalysed reaction is N-terminal L-glutamyl-[protein] + L-leucyl-tRNA(Leu) = N-terminal L-leucyl-L-glutamyl-[protein] + tRNA(Leu) + H(+). The enzyme catalyses N-terminal L-aspartyl-[protein] + L-leucyl-tRNA(Leu) = N-terminal L-leucyl-L-aspartyl-[protein] + tRNA(Leu) + H(+). Its function is as follows. Functions in the N-end rule pathway of protein degradation where it conjugates Leu from its aminoacyl-tRNA to the N-termini of proteins containing an N-terminal aspartate or glutamate. The protein is Aspartate/glutamate leucyltransferase of Bordetella avium (strain 197N).